The primary structure comprises 799 residues: Protein ADP-ribosyltransferase PARP3 (799 aa).

A compositionally biased stretch (basic and acidic residues) spans 1–49; sequence MKVESRSHNVHHAHGEEEKVMTRKQKAESKAHEVEHSPKKAKVEDEKNG. The disordered stretch occupies residues 1–55; the sequence is MKVESRSHNVHHAHGEEEKVMTRKQKAESKAHEVEHSPKKAKVEDEKNGHTNGKS. A PADR1 zinc-binding domain is found at 39-188; sequence KKAKVEDEKN…QRDLGLAIKP (150 aa). In terms of domain architecture, SAP spans 71–105; sequence NEQLSLEQMKEILEANDLDSSGSDLEITRRCQDLL. The tract at residues 108-152 is zinc ribbon; it reads GALEKCMVCNGNMEFDGRRYGCRGFYSEWSSCTFSTREPPRKDEP. 4 residues coordinate Zn(2+): Cys-113, Cys-116, Cys-129, and Cys-139. A disordered region spans residues 140–161; sequence TFSTREPPRKDEPIKLPDSVQN. The span at 145–154 shows a compositional bias: basic and acidic residues; that stretch reads EPPRKDEPIK. Residues 189–261 form the BRCT domain; that stretch reads FTGMMISLMG…EPQPLESYDL (73 aa). The 101-residue stretch at 309–409 folds into the WGR domain; sequence DGKIFEKDGI…KKFQKKPLKF (101 aa). The region spanning 436–555 is the PARP alpha-helical domain; that stretch reads HCKLEPMVAN…DITLASHLIG (120 aa). Positions 564 to 795 constitute a PARP catalytic domain; it reads DPLSDTYKKL…VKYEEKDAVI (232 aa).

This sequence belongs to the ARTD/PARP family.

It localises to the nucleus. It carries out the reaction L-aspartyl-[protein] + NAD(+) = 4-O-(ADP-D-ribosyl)-L-aspartyl-[protein] + nicotinamide. It catalyses the reaction L-glutamyl-[protein] + NAD(+) = 5-O-(ADP-D-ribosyl)-L-glutamyl-[protein] + nicotinamide. Functionally, involved in the base excision repair (BER) pathway, by catalyzing the poly(ADP-ribosyl)ation of a limited number of acceptor proteins involved in chromatin architecture and in DNA metabolism. This modification follows DNA damages and appears as an obligatory step in a detection/signaling pathway leading to the reparation of DNA strand breaks. This Medicago truncatula (Barrel medic) protein is Protein ADP-ribosyltransferase PARP3 (PARP3).